The primary structure comprises 105 residues: Large ribosomal subunit protein bL21 (105 aa).

The protein belongs to the bacterial ribosomal protein bL21 family. Part of the 50S ribosomal subunit. Contacts protein L20.

Its function is as follows. This protein binds to 23S rRNA in the presence of protein L20. In Stenotrophomonas maltophilia (strain R551-3), this protein is Large ribosomal subunit protein bL21.